A 610-amino-acid polypeptide reads, in one-letter code: MDIKGQFWNDDDSEGDNESEEFLYGVQGSCAADLYRHPQLDADIEAVKEIYSENSVSIREYGTIDDVDIDLHINISFLDEEVSTAWKVLRTEPIVLRLRFSLSQYLDGPEPSIEVFQPSNKEGFGLGLQLKKILGMFTSQQWKHLSNDFLKTQQEKRHSWLKASGTIKKFRAGLSIFSPIPKSPSFPIIQDSMLKGKLGVPELRVGRLMNRSVSCTMKNPKVEVFGYPPSPQVSGHCKNIPTLEYGFLVQIMKYAEQRIPTLNEYCVVCDEQHVFQNGSMLKPAVCTRELCVFSFYTLGVMSGAAEEVATGAEVVDLLVAMCRAALESPRKSIIFEPYPSVVDPTDPKTLAFNPKKKNYERLQKALDSVMSIREMTQGSYLEIKKQMDKLDPLAHPLLQWIISSNRSHIVKLPLSRLKFMHTSHQFLLLSSPPAKEARFRTAKKLYGSTFAFHGSHIENWHSILRNGLVNASYTKLQLHGAAYGKGIYLSPISSISFGYSGMGKGQHRMPSKDELVQRYNRMNTIPQTRSIQSRFLQSRNLNCIALCEVITSKDLQKHGNIWVCPVSDHVCTRFFFVYEDGQVGDANINTQDPKIQKEIMRVIGTQVYTN.

The region spanning 374 to 600 (EMTQGSYLEI…QDPKIQKEIM (227 aa)) is the PARP catalytic domain. ADP-ribosyl aspartic acid is present on aspartate 580.

It belongs to the ARTD/PARP family. Auto-mono-ADP-ribosylated.

It carries out the reaction L-aspartyl-[protein] + NAD(+) = 4-O-(ADP-D-ribosyl)-L-aspartyl-[protein] + nicotinamide. The enzyme catalyses L-cysteinyl-[protein] + NAD(+) = S-(ADP-D-ribosyl)-L-cysteinyl-[protein] + nicotinamide + H(+). In terms of biological role, mono-ADP-ribosyltransferase that mediates mono-ADP-ribosylation of target proteins. This chain is Protein mono-ADP-ribosyltransferase PARP6, found in Pongo abelii (Sumatran orangutan).